Here is a 563-residue protein sequence, read N- to C-terminus: Dihydroxy-acid dehydratase (563 aa).

Residue D79 participates in Mg(2+) binding. C120 contacts [2Fe-2S] cluster. Residues D121 and K122 each coordinate Mg(2+). At K122 the chain carries N6-carboxylysine. C193 contacts [2Fe-2S] cluster. E451 is a Mg(2+) binding site. S477 (proton acceptor) is an active-site residue.

This sequence belongs to the IlvD/Edd family. In terms of assembly, homodimer. The cofactor is [2Fe-2S] cluster. Mg(2+) serves as cofactor.

It carries out the reaction (2R)-2,3-dihydroxy-3-methylbutanoate = 3-methyl-2-oxobutanoate + H2O. It catalyses the reaction (2R,3R)-2,3-dihydroxy-3-methylpentanoate = (S)-3-methyl-2-oxopentanoate + H2O. The protein operates within amino-acid biosynthesis; L-isoleucine biosynthesis; L-isoleucine from 2-oxobutanoate: step 3/4. It participates in amino-acid biosynthesis; L-valine biosynthesis; L-valine from pyruvate: step 3/4. Functions in the biosynthesis of branched-chain amino acids. Catalyzes the dehydration of (2R,3R)-2,3-dihydroxy-3-methylpentanoate (2,3-dihydroxy-3-methylvalerate) into 2-oxo-3-methylpentanoate (2-oxo-3-methylvalerate) and of (2R)-2,3-dihydroxy-3-methylbutanoate (2,3-dihydroxyisovalerate) into 2-oxo-3-methylbutanoate (2-oxoisovalerate), the penultimate precursor to L-isoleucine and L-valine, respectively. This Sulfurovum sp. (strain NBC37-1) protein is Dihydroxy-acid dehydratase.